The chain runs to 350 residues: Protein-glutamate methylesterase/protein-glutamine glutaminase 6 (350 aa).

In terms of domain architecture, Response regulatory spans 11-126 (RVLVVDDSAA…LAPVREELLE (116 aa)). 4-aspartylphosphate is present on D62. Residues 150 to 347 (ELEPARVAVV…ARLVEFARDA (198 aa)) enclose the CheB-type methylesterase domain. Catalysis depends on residues S162, H189, and D289.

Belongs to the CheB family. In terms of processing, phosphorylated by CheA. Phosphorylation of the N-terminal regulatory domain activates the methylesterase activity.

It localises to the cytoplasm. The enzyme catalyses [protein]-L-glutamate 5-O-methyl ester + H2O = L-glutamyl-[protein] + methanol + H(+). It carries out the reaction L-glutaminyl-[protein] + H2O = L-glutamyl-[protein] + NH4(+). In terms of biological role, involved in chemotaxis. Part of a chemotaxis signal transduction system that modulates chemotaxis in response to various stimuli. Catalyzes the demethylation of specific methylglutamate residues introduced into the chemoreceptors (methyl-accepting chemotaxis proteins or MCP) by CheR. Also mediates the irreversible deamidation of specific glutamine residues to glutamic acid. This chain is Protein-glutamate methylesterase/protein-glutamine glutaminase 6, found in Anaeromyxobacter dehalogenans (strain 2CP-C).